The following is a 292-amino-acid chain: MFTGSIVALVTPMDEKGNVSRSCLKKLIDYHVANGTSAIVSVGTTGESATLSHDEHGDVVMMTLELADGRIPVIAGTGANATAEAISLTQRFNDSGIVGCLTVTPYYNRPTQEGLFQHFKAIAEHTDLPQILYNVPSRTGCDMLPETVGRLAEIKNIIAIKEATGNLTRVHQIKELVSDDFILLSGDDASALDFMQLGGHGVISVTANVAAREMADMCKLAAEGQFAEARAINQRLMPLHNKLFVEPNPIPVKWACKALGLVATDTLRLPMTPITDHGRDIVKAALQHAGLL.

Thr45 contacts pyruvate. Tyr133 functions as the Proton donor/acceptor in the catalytic mechanism. The active-site Schiff-base intermediate with substrate is the Lys161. Residue Ile203 participates in pyruvate binding.

Belongs to the DapA family. In terms of assembly, homotetramer; dimer of dimers.

The protein localises to the cytoplasm. It carries out the reaction L-aspartate 4-semialdehyde + pyruvate = (2S,4S)-4-hydroxy-2,3,4,5-tetrahydrodipicolinate + H2O + H(+). It functions in the pathway amino-acid biosynthesis; L-lysine biosynthesis via DAP pathway; (S)-tetrahydrodipicolinate from L-aspartate: step 3/4. Catalyzes the condensation of (S)-aspartate-beta-semialdehyde [(S)-ASA] and pyruvate to 4-hydroxy-tetrahydrodipicolinate (HTPA). This chain is 4-hydroxy-tetrahydrodipicolinate synthase, found in Salmonella paratyphi A (strain AKU_12601).